A 428-amino-acid polypeptide reads, in one-letter code: C4-dicarboxylate transport protein (428 aa).

9 helical membrane-spanning segments follow: residues 4 to 24 (SLFK…ILLG), 44 to 64 (LIKM…IAGM), 76 to 96 (VALL…LIIV), 142 to 162 (IGAF…LFGF), 184 to 204 (VIFG…FGAM), 222 to 242 (LIIC…GTIA), 289 to 309 (VVGL…SIYL), 326 to 346 (IFHQ…AAGV), and 352 to 372 (IVLA…LALI).

This sequence belongs to the dicarboxylate/amino acid:cation symporter (DAACS) (TC 2.A.23) family.

The protein localises to the cell inner membrane. In terms of biological role, responsible for the transport of dicarboxylates such as succinate, fumarate, and malate from the periplasm across the membrane. The polypeptide is C4-dicarboxylate transport protein (Salmonella gallinarum (strain 287/91 / NCTC 13346)).